A 399-amino-acid polypeptide reads, in one-letter code: Lymphoid enhancer-binding factor 1 (399 aa).

Gly residues predominate over residues 1-14 (MPQLSGGGGGGGGD). The tract at residues 1–62 (MPQLSGGGGG…IKSSLVNESE (62 aa)) is CTNNB1-binding. Positions 1–104 (MPQLSGGGGG…KHPDGGLYNK (104 aa)) are disordered. Composition is skewed to basic and acidic residues over residues 24–45 (IPFKDEGDPQKEKIFAEISHPE) and 82–98 (PYHDKAREHPDDGKHPD). Residue lysine 27 forms a Glycyl lysine isopeptide (Lys-Gly) (interchain with G-Cter in SUMO) linkage. Serine 132 is subject to Phosphoserine. Threonine 155 is modified (phosphothreonine; by NLK). Serine 166 is modified (phosphoserine; by NLK). Disordered stretches follow at residues 166-192 (SPGSHPSHIPSDVNSKQGMSRHPPAPD) and 268-298 (VKQEHPHTDSDLMHVKPQHEQRKEQEPKRPH). Residue lysine 269 forms a Glycyl lysine isopeptide (Lys-Gly) (interchain with G-Cter in SUMO) linkage. Residues 269–296 (KQEHPHTDSDLMHVKPQHEQRKEQEPKR) show a composition bias toward basic and acidic residues. Positions 299 to 367 (IKKPLNAFML…LHMQLYPGWS (69 aa)) form a DNA-binding region, HMG box. The interval 369-399 (RDNYGKKKKRKREKLQESASGTGPRMTAAYI) is disordered.

The protein belongs to the TCF/LEF family. In terms of assembly, binds the armadillo repeat of CTNNB1 and forms a stable complex. Interacts with EP300, TLE1 and PIASG. Binds ALYREF/THOC4, MDFI and MDFIC. Interacts with NLK. Interacts with DAZAP2. In terms of processing, phosphorylated at Thr-155 and/or Ser-166 by NLK. Phosphorylation by NLK at these sites represses LEF1-mediated transcriptional activation of target genes of the canonical Wnt signaling pathway. Detected in thymus. Not detected in normal colon, but highly expressed in colon cancer biopsies and colon cancer cell lines. Expressed in several pancreatic tumors and weakly expressed in normal pancreatic tissue. Isoforms 1 and 5 are detected in several pancreatic cell lines.

The protein resides in the nucleus. Its function is as follows. Transcription factor that binds DNA in a sequence-specific manner. Participates in the Wnt signaling pathway. Activates transcription of target genes in the presence of CTNNB1 and EP300. PIAG antagonizes both Wnt-dependent and Wnt-independent activation by LEF1. TLE1, TLE2, TLE3 and TLE4 repress transactivation mediated by LEF1 and CTNNB1. Regulates T-cell receptor alpha enhancer function. Required for IL17A expressing gamma-delta T-cell maturation and development, via binding to regulator loci of BLK to modulate expression. Acts as a positive regulator of odontoblast differentiation during mesenchymal tooth germ formation, expression is repressed during the bell stage by MSX1-mediated inhibition of CTNNB1 signaling. May play a role in hair cell differentiation and follicle morphogenesis. Functionally, transcriptionally activates MYC and CCND1 expression and enhances proliferation of pancreatic tumor cells. In terms of biological role, lacks the CTNNB1 interaction domain and may therefore be an antagonist for Wnt signaling. Transcriptionally activates the fibronectin promoter, binds to and represses transcription from the E-cadherin promoter in a CTNNB1-independent manner, and is involved in reducing cellular aggregation and increasing cell migration of pancreatic cancer cells. The protein is Lymphoid enhancer-binding factor 1 of Homo sapiens (Human).